The sequence spans 72 residues: uncharacterized protein (72 aa).

A helical transmembrane segment spans residues 23-45 (ITNLLITTILLCFFNATTYWKLF).

Its subcellular location is the membrane. This is an uncharacterized protein from Schizosaccharomyces pombe (strain 972 / ATCC 24843) (Fission yeast).